Here is a 367-residue protein sequence, read N- to C-terminus: CCN family member 4 (367 aa).

Positions 1–22 (MRWLLPWTLAAVAVLMVGNILA) are cleaved as a signal peptide. The 74-residue stretch at 45–118 (RPEFCKWPCE…RYAIGVCAQV (74 aa)) folds into the IGFBP N-terminal domain. 4 disulfides stabilise this stretch: Cys49/Cys73, Cys53/Cys75, Cys55/Cys76, and Cys62/Cys79. Asn86 carries an N-linked (GlcNAc...) asparagine glycan. Cystine bridges form between Cys87–Cys101 and Cys93–Cys115. Residues 121-186 (VGCVLDGVRY…GQCCEQWVCD (66 aa)) enclose the VWFC domain. A glycan (N-linked (GlcNAc...) asparagine) is linked at Asn143. In terms of domain architecture, TSP type-1 spans 215 to 260 (NCIAYTSPWSPCSTTCGLGISTRISNVNARCWPEQESRLCNLRPCD). Intrachain disulfides connect Cys273/Cys310, Cys290/Cys324, Cys301/Cys340, Cys304/Cys342, and Cys309/Cys346. A CTCK domain is found at 273–347 (CLAVYQPEEA…NACFCNLSCR (75 aa)). Asn284 carries N-linked (GlcNAc...) asparagine glycosylation. Asn343 is a glycosylation site (N-linked (GlcNAc...) asparagine).

This sequence belongs to the CCN family.

Its subcellular location is the secreted. Downstream regulator in the Wnt/Frizzled-signaling pathway. Associated with cell survival. Adheres to skin and melanoma fibroblasts. In vitro binding to skin fibroblasts occurs through the proteoglycans, decorin and biglycan. In Rattus norvegicus (Rat), this protein is CCN family member 4 (Ccn4).